Consider the following 605-residue polypeptide: ABC transporter E family member 2 (605 aa).

Residues 46–75 (KLAFISEELCIGCGICVKKCPFEAIQIINL) enclose the 4Fe-4S ferredoxin-type domain. ABC transporter domains are found at residues 70–315 (IQII…FLAG) and 344–568 (IQSY…LSHL). Residues 110–117 (GTNGIGKS) and 381–388 (GENGTGKT) contribute to the ATP site.

It belongs to the ABC transporter superfamily. ABCE family. Expressed in roots, stems, leaves, flowers and siliques.

It localises to the membrane. In Arabidopsis thaliana (Mouse-ear cress), this protein is ABC transporter E family member 2 (ABCE2).